Consider the following 296-residue polypeptide: Thioredoxin-related transmembrane protein 2 (296 aa).

Positions 1–48 are cleaved as a signal peptide; sequence MAVLAPLIALVYSVPRLSRWLAQPYYLLSALLSAAFLLVRKLPPLCHG. The Extracellular portion of the chain corresponds to 49–102; sequence LPTQREDGNPCDFDWREVEILMFLSAIVMMKNRRSITVEQHIGNIFMFSKVANA. A helical transmembrane segment spans residues 103 to 125; the sequence is ILFFRLDIRMGLLYITLCIVFLM. In terms of domain architecture, Thioredoxin spans 114-270; it reads LLYITLCIVF…YQRAKKPSKA (157 aa). The Cytoplasmic portion of the chain corresponds to 126–296; it reads TCEPPLYMGP…VSDGENKKDK (171 aa). Phosphoserine is present on residues S211, S243, and S288. Positions 266-296 are disordered; the sequence is KPSKAGDSIPEEQPVASAPTTVSDGENKKDK. Positions 293–296 match the Di-lysine motif motif; the sequence is KKDK.

Monomer. Homodimer; disulfide-linked. Occurs in both reduced and oxidized monomeric form. Oxidative conditions increase homodimerization. Interacts with CANX. Interacts with ATP2A2.

It is found in the endoplasmic reticulum membrane. The protein resides in the mitochondrion membrane. Its function is as follows. Endoplasmic reticulum and mitochondria-associated protein that probably functions as a regulator of cellular redox state and thereby regulates protein post-translational modification, protein folding and mitochondrial activity. Indirectly regulates neuronal proliferation, migration, and organization in the developing brain. This Pongo abelii (Sumatran orangutan) protein is Thioredoxin-related transmembrane protein 2 (TMX2).